An 851-amino-acid polypeptide reads, in one-letter code: Probable disease resistance protein At1g15890 (851 aa).

The NB-ARC domain maps to 139-441 (AEKIPAPKVE…CEGFIDGNED (303 aa)). Position 181-188 (181-188 (GMGGVGKT)) interacts with ATP. LRR repeat units lie at residues 514–535 (SLRRMSLMCNQIANISSSSNSP), 536–557 (NLSTLLLQNNKLVHISCDFFRF), 560–582 (ALVVLDLSRNSSLSSLPEAISKL), 584–605 (SLQYINLSTTGIKWLPVSFKEL), and 607–629 (KLIHLNLEFTDELESIVGIATSL).

It belongs to the disease resistance NB-LRR family.

Its function is as follows. Probable disease resistance protein. The polypeptide is Probable disease resistance protein At1g15890 (Arabidopsis thaliana (Mouse-ear cress)).